We begin with the raw amino-acid sequence, 1949 residues long: Protein GREB1 (1949 aa).

Disordered regions lie at residues 52 to 77, 302 to 334, and 1085 to 1210; these read EGGS…GPPN, ILSN…GGGN, and EALE…GQRS. The span at 59 to 68 shows a compositional bias: acidic residues; the sequence is NEEEEEEGEG. 2 stretches are compositionally biased toward basic and acidic residues: residues 1085–1095 and 1110–1126; these read EALESDAEKLS and TSEK…RSHD. The segment covering 1127–1147 has biased composition (low complexity); it reads SASSSLSSKASGSALGGESSA. Basic and acidic residues predominate over residues 1166-1178; it reads PAEEGRAPGEKQR. Residues 1868–1888 form a helical membrane-spanning segment; the sequence is DLLFSGLLLYLCDSFVGASFL.

Belongs to the GREB1 family. In terms of tissue distribution, expressed in proliferating prostatic tissue and prostate cancer.

It localises to the membrane. Its function is as follows. May play a role in estrogen-stimulated cell proliferation. Acts as a regulator of hormone-dependent cancer growth in breast and prostate cancers. In Homo sapiens (Human), this protein is Protein GREB1 (GREB1).